The following is a 32-amino-acid chain: Photosystem II reaction center protein Z (32 aa).

Residues 12–32 (IGSAAWAGLVLLVGTLNYLVI) form a helical membrane-spanning segment.

The protein belongs to the PsbZ family. As to quaternary structure, PSII is composed of 1 copy each of membrane proteins PsbA, PsbB, PsbC, PsbD, PsbE, PsbF, PsbH, PsbI, PsbJ, PsbK, PsbL, PsbM, PsbT, PsbY, PsbZ, Psb30/Ycf12, at least 3 peripheral proteins of the oxygen-evolving complex and a large number of cofactors. It forms dimeric complexes.

It localises to the plastid. The protein resides in the chloroplast thylakoid membrane. In terms of biological role, may control the interaction of photosystem II (PSII) cores with the light-harvesting antenna, regulates electron flow through the 2 photosystem reaction centers. PSII is a light-driven water plastoquinone oxidoreductase, using light energy to abstract electrons from H(2)O, generating a proton gradient subsequently used for ATP formation. In Euglena anabaena (Euglenaria anabaena), this protein is Photosystem II reaction center protein Z.